We begin with the raw amino-acid sequence, 100 residues long: NADH-quinone oxidoreductase subunit K (100 aa).

Helical transmembrane passes span Leu-4–Val-24, Ile-28–Val-48, and Ile-60–Leu-80.

It belongs to the complex I subunit 4L family. NDH-1 is composed of 13 different subunits. Subunits NuoA, H, J, K, L, M, N constitute the membrane sector of the complex.

It is found in the cell membrane. The enzyme catalyses a quinone + NADH + 5 H(+)(in) = a quinol + NAD(+) + 4 H(+)(out). In terms of biological role, NDH-1 shuttles electrons from NADH, via FMN and iron-sulfur (Fe-S) centers, to quinones in the respiratory chain. The immediate electron acceptor for the enzyme in this species is believed to be ubiquinone. Couples the redox reaction to proton translocation (for every two electrons transferred, four hydrogen ions are translocated across the cytoplasmic membrane), and thus conserves the redox energy in a proton gradient. This Buchnera aphidicola subsp. Schizaphis graminum (strain Sg) protein is NADH-quinone oxidoreductase subunit K.